A 40-amino-acid polypeptide reads, in one-letter code: Photosystem II reaction center protein J (40 aa).

A helical membrane pass occupies residues isoleucine 8 to phenylalanine 28.

The protein belongs to the PsbJ family. As to quaternary structure, PSII is composed of 1 copy each of membrane proteins PsbA, PsbB, PsbC, PsbD, PsbE, PsbF, PsbH, PsbI, PsbJ, PsbK, PsbL, PsbM, PsbT, PsbX, PsbY, PsbZ, Psb30/Ycf12, at least 3 peripheral proteins of the oxygen-evolving complex and a large number of cofactors. It forms dimeric complexes.

It localises to the plastid. The protein localises to the chloroplast thylakoid membrane. Its function is as follows. One of the components of the core complex of photosystem II (PSII). PSII is a light-driven water:plastoquinone oxidoreductase that uses light energy to abstract electrons from H(2)O, generating O(2) and a proton gradient subsequently used for ATP formation. It consists of a core antenna complex that captures photons, and an electron transfer chain that converts photonic excitation into a charge separation. The sequence is that of Photosystem II reaction center protein J from Pelargonium hortorum (Common geranium).